A 266-amino-acid chain; its full sequence is Cytochrome c oxidase assembly factor 7 homolog (266 aa).

Sel1-like repeat units follow at residues 32–64 (PEACHLLGDYLEGIKKDFEKASKVYKSTCDDYG) and 66–104 (AKSCYKYGNYSFLGKGKSGSKGNPQVAYEYYEKGCNLND). A compositionally biased stretch (low complexity) spans 166-179 (AVTASSGSGTSSPP). Residues 166 to 187 (AVTASSGSGTSSPPAGQPPLKD) form a disordered region. One copy of the Sel1-like 3 repeat lies at 212–247 (MYACANLSQMYARGDGIEKNEKEAEKYKKLALEMQD).

It belongs to the hcp beta-lactamase family.

Its function is as follows. Required for locomotion. Probably involved in the regulation of formation/maintenance of motor neurons at presynaptic terminals at the neuromuscular junction. The polypeptide is Cytochrome c oxidase assembly factor 7 homolog (Drosophila melanogaster (Fruit fly)).